Consider the following 229-residue polypeptide: ATP synthase subunit a (229 aa).

6 consecutive transmembrane segments (helical) span residues 25 to 45, 82 to 102, 111 to 131, 142 to 162, 181 to 201, and 202 to 222; these read ADAI…SILA, FFPL…IGLI, NINT…IVGI, FLGP…IGHF, LVLM…MMLM, and GVLV…IYIQ.

It belongs to the ATPase A chain family. In terms of assembly, F-type ATPases have 2 components, CF(1) - the catalytic core - and CF(0) - the membrane proton channel. CF(1) has five subunits: alpha(3), beta(3), gamma(1), delta(1), epsilon(1). CF(0) has three main subunits: a(1), b(2) and c(9-12). The alpha and beta chains form an alternating ring which encloses part of the gamma chain. CF(1) is attached to CF(0) by a central stalk formed by the gamma and epsilon chains, while a peripheral stalk is formed by the delta and b chains.

Its subcellular location is the cell inner membrane. Its function is as follows. Key component of the proton channel; it plays a direct role in the translocation of protons across the membrane. The polypeptide is ATP synthase subunit a (Geotalea daltonii (strain DSM 22248 / JCM 15807 / FRC-32) (Geobacter daltonii)).